Reading from the N-terminus, the 551-residue chain is Lysine--tRNA ligase (551 aa).

A 'HIGH' region motif is present at residues 54 to 62 (PSGLPHIGT). The 'KMSKS' region motif lies at 303 to 307 (KISKS). K306 contacts ATP.

This sequence belongs to the class-I aminoacyl-tRNA synthetase family.

The protein localises to the cytoplasm. It carries out the reaction tRNA(Lys) + L-lysine + ATP = L-lysyl-tRNA(Lys) + AMP + diphosphate. This is Lysine--tRNA ligase from Brucella melitensis biotype 1 (strain ATCC 23456 / CCUG 17765 / NCTC 10094 / 16M).